The following is a 424-amino-acid chain: CAAX prenyl protease 1 homolog (424 aa).

Helical transmembrane passes span 3–23, 67–87, 109–129, 155–175, and 185–205; these read IPFMETVVGFMIVMYIFETYL, EFVTILMDSAILFFGILPWFW, LSFLAGVMTWSQITDLPFSLY, GTFLSVILGPPIVAAIIFIVQ, and LWAFMFILSLVMMTIYPVLIA. H284 is a binding site for Zn(2+). The active site involves E285. Residue H288 participates in Zn(2+) binding. The next 2 membrane-spanning stretches (helical) occupy residues 295 to 315 and 332 to 352; these read TYSFIAVQILAFLQFGGYTLV and VLIGLIIFQHTVIPLQHLVSF. Zn(2+) is bound at residue E362. The active-site Proton donor is D366.

This sequence belongs to the peptidase M48A family. The cofactor is Zn(2+). In terms of tissue distribution, expressed in leaves, stems and flowers.

It localises to the endoplasmic reticulum membrane. The catalysed reaction is Hydrolyzes the peptide bond -P2-(S-farnesyl or geranylgeranyl)C-P1'-P2'-P3'-COOH where P1' and P2' are amino acids with aliphatic side chains and P3' is any C-terminal residue.. Functionally, proteolytically removes the C-terminal three residues of farnesylated proteins. The substrate specificity is only partially overlapping with that of FACE2. The sequence is that of CAAX prenyl protease 1 homolog (FACE1) from Arabidopsis thaliana (Mouse-ear cress).